Reading from the N-terminus, the 90-residue chain is DNA-binding protein HU-beta (90 aa).

It belongs to the bacterial histone-like protein family. In terms of assembly, heterodimer of an alpha and a beta chain.

In terms of biological role, histone-like DNA-binding protein which is capable of wrapping DNA to stabilize it, and thus to prevent its denaturation under extreme environmental conditions. The polypeptide is DNA-binding protein HU-beta (hupB) (Serratia marcescens).